We begin with the raw amino-acid sequence, 305 residues long: Flagellin FlaB2 (305 aa).

The propeptide at 1–18 is propeptide; it reads MGLQKIVKKYNKKMKRKG.

Belongs to the archaeal flagellin family. Post-translationally, glycosylated.

The protein resides in the archaeal flagellum. Flagellin is the subunit protein which polymerizes to form the filaments of archaeal flagella. The chain is Flagellin FlaB2 from Saccharolobus shibatae (strain ATCC 51178 / DSM 5389 / JCM 8931 / NBRC 15437 / B12) (Sulfolobus shibatae).